The chain runs to 511 residues: Xylose import ATP-binding protein XylG (511 aa).

2 ABC transporter domains span residues 6-244 (LEMR…VGRE) and 261-506 (FEAR…IGKP). 38–45 (GENGAGKS) is an ATP binding site.

The protein belongs to the ABC transporter superfamily. Xylose importer (TC 3.A.1.2.4) family. The complex is composed of two ATP-binding proteins (XylG), two transmembrane proteins (XylH) and a solute-binding protein (XylF).

The protein resides in the cell inner membrane. It catalyses the reaction D-xylose(out) + ATP + H2O = D-xylose(in) + ADP + phosphate + H(+). In terms of biological role, part of the ABC transporter complex XylFGH involved in xylose import. Responsible for energy coupling to the transport system. This Brucella suis biovar 1 (strain 1330) protein is Xylose import ATP-binding protein XylG.